The chain runs to 292 residues: MEITASLVKELRERTGAGMMECKKALVENAGDIDAAAEWLRKSGLAKADKKADRVAAEGRIATAQAGGKAVLVEVNSETDFVAKDENFLAFTEVVANAALNSDAADAEALKSVKLDSGETIEERRAAVIAKVGENLQVRRLVRIDSANNVAAYVHGGRIGVLVELKGGDIELARGIAMHIAAMNPPHVKASDVPAEFVAKEKEIELAKMSEKDKAKPAEILEKIISGKISKIVNEVTLYGQPYVLNTDQTVEQAVKAAGAEVIGFQRLAVGEGIEKVVEDYAAEVMKQAGLA.

Residues 79–82 form an involved in Mg(2+) ion dislocation from EF-Tu region; it reads TDFV.

It belongs to the EF-Ts family.

The protein resides in the cytoplasm. Associates with the EF-Tu.GDP complex and induces the exchange of GDP to GTP. It remains bound to the aminoacyl-tRNA.EF-Tu.GTP complex up to the GTP hydrolysis stage on the ribosome. The protein is Elongation factor Ts of Xanthomonas axonopodis pv. citri (strain 306).